Reading from the N-terminus, the 436-residue chain is Prenyltransferase nscD (436 aa).

The protein belongs to the tryptophan dimethylallyltransferase family.

The protein operates within secondary metabolite biosynthesis. Functionally, prenyltransferase; part of the gene cluster that mediates the biosynthesis of neosartoricin B, a prenylated anthracenone that probably exhibits T-cell antiproliferative activity, suggestive of a physiological role as an immunosuppressive agent. The non-reducing polyketide synthase nscA probably synthesizes and cyclizes the decaketide backbone. The hydrolase nscB then mediates the product release through hydrolysis followed by spontaneous decarboxylation. The prenyltransferase nscD catalyzes the addition of the dimethylallyl group to the aromatic C5. The FAD-dependent monooxygenase nscC is then responsible for the stereospecific hydroxylation at C2. Neosartoricin B can be converted into two additional compounds neosartoricins C and D. Neosartoricin C is a spirocyclic compound that is cyclized through the attack of C3 hydroxyl on C14, followed by dehydration. On the other hand, neosartoricin D is a further cyclized compound in which attack of C2 on C14 in neosartoricin C results in the formation of the acetal-containing dioxabicyclo-octanone ring. Both of these compounds are novel and possibly represent related metabolites of the gene cluster. In Arthroderma gypseum (strain ATCC MYA-4604 / CBS 118893) (Microsporum gypseum), this protein is Prenyltransferase nscD.